Here is a 457-residue protein sequence, read N- to C-terminus: Multidrug resistance protein MdtK (457 aa).

The next 12 membrane-spanning stretches (helical) occupy residues 11-31 (LLAL…MGFV), 53-73 (IWLP…PVIA), 93-113 (WLAG…GYII), 127-147 (AVGY…FQVA), 160-180 (GMVM…IFIY), 189-209 (GGVG…LAMV), 243-263 (LPIA…ALLV), 276-296 (IALN…AAVT), 314-334 (AART…IFTV), 350-370 (VVTL…SDSI), 387-407 (IFYI…YILA), and 418-438 (PAGF…MMML).

This sequence belongs to the multi antimicrobial extrusion (MATE) (TC 2.A.66.1) family. MdtK subfamily.

Its subcellular location is the cell inner membrane. In terms of biological role, multidrug efflux pump that functions probably as a Na(+)/drug antiporter. The chain is Multidrug resistance protein MdtK from Escherichia coli O45:K1 (strain S88 / ExPEC).